Consider the following 150-residue polypeptide: Plasmin C (150 aa).

The signal sequence occupies residues 1–14 (MRSFFLLCALVAVC).

This is Plasmin C (PLSC) from Physarum polycephalum (Slime mold).